The sequence spans 186 residues: Astacin-like metalloprotease toxin 5 (186 aa).

The region spanning 1-186 (NAVKYDQQLW…CHSKRKAELL (186 aa)) is the Peptidase M12A domain. 2 disulfide bridges follow: Cys-42-Cys-177 and Cys-63-Cys-84. Residue His-92 coordinates Zn(2+). The active site involves Glu-93. Zn(2+) is bound by residues His-96 and His-102. Asn-122 carries an N-linked (GlcNAc...) asparagine glycan.

Monomer. The cofactor is Zn(2+). Expressed by the venom gland.

It localises to the secreted. Its activity is regulated as follows. Inhibited by 1,10-phenanthroline. Its function is as follows. Zinc metalloprotease. Provoques deadhesion of endothelial cells from cell cultures, and also degradation of fibronectin, fibrinogen and gelatin in vitro. Its role in the venom is not fully understood but it might act as a spreading factor that facilitates diffusion of other venom toxins. Alternatively, it might be involved in the proteolytic processing of other venom toxins or it might play a role in extra-oral digestion of prey. The sequence is that of Astacin-like metalloprotease toxin 5 from Loxosceles gaucho (Spider).